The sequence spans 145 residues: SsrA-binding protein (145 aa).

Belongs to the SmpB family.

Its subcellular location is the cytoplasm. Required for rescue of stalled ribosomes mediated by trans-translation. Binds to transfer-messenger RNA (tmRNA), required for stable association of tmRNA with ribosomes. tmRNA and SmpB together mimic tRNA shape, replacing the anticodon stem-loop with SmpB. tmRNA is encoded by the ssrA gene; the 2 termini fold to resemble tRNA(Ala) and it encodes a 'tag peptide', a short internal open reading frame. During trans-translation Ala-aminoacylated tmRNA acts like a tRNA, entering the A-site of stalled ribosomes, displacing the stalled mRNA. The ribosome then switches to translate the ORF on the tmRNA; the nascent peptide is terminated with the 'tag peptide' encoded by the tmRNA and targeted for degradation. The ribosome is freed to recommence translation, which seems to be the essential function of trans-translation. In Mycoplasma genitalium (strain ATCC 33530 / DSM 19775 / NCTC 10195 / G37) (Mycoplasmoides genitalium), this protein is SsrA-binding protein.